We begin with the raw amino-acid sequence, 265 residues long: Tryptophan synthase alpha chain (265 aa).

Active-site proton acceptor residues include Glu-49 and Asp-60.

The protein belongs to the TrpA family. As to quaternary structure, tetramer of two alpha and two beta chains.

It catalyses the reaction (1S,2R)-1-C-(indol-3-yl)glycerol 3-phosphate + L-serine = D-glyceraldehyde 3-phosphate + L-tryptophan + H2O. It functions in the pathway amino-acid biosynthesis; L-tryptophan biosynthesis; L-tryptophan from chorismate: step 5/5. The alpha subunit is responsible for the aldol cleavage of indoleglycerol phosphate to indole and glyceraldehyde 3-phosphate. The chain is Tryptophan synthase alpha chain from Polynucleobacter asymbioticus (strain DSM 18221 / CIP 109841 / QLW-P1DMWA-1) (Polynucleobacter necessarius subsp. asymbioticus).